Here is a 693-residue protein sequence, read N- to C-terminus: Phenoloxidase subunit 2 (693 aa).

A propeptide spanning residues 1–51 (MADVFESLELLFDRPNEPLITPKGENNSVFQLTEQFLTEDYANNGIELNNR) is cleaved from the precursor. Residues N26 and N64 are each glycosylated (N-linked (GlcNAc...) asparagine). Cu cation-binding residues include H213, H217, and H243. E351 serves as the catalytic Proton acceptor. 3 residues coordinate Cu cation: H366, H370, and H406. Residues N462 and N494 are each glycosylated (N-linked (GlcNAc...) asparagine). 2 disulfides stabilise this stretch: C583–C627 and C585–C634. N680 carries N-linked (GlcNAc...) asparagine glycosylation.

In terms of assembly, heterodimer. It depends on Cu(2+) as a cofactor. The N-terminus is blocked. As to expression, synthesized by hemocytes and released into the hemolymph plasma.

Its subcellular location is the secreted. The enzyme catalyses 2 L-dopa + O2 = 2 L-dopaquinone + 2 H2O. It catalyses the reaction L-tyrosine + O2 = L-dopaquinone + H2O. Functionally, this is a copper-containing oxidase that functions in the formation of pigments such as melanins and other polyphenolic compounds. Catalyzes the rate-limiting conversions of tyrosine to DOPA, DOPA to DOPA-quinone and possibly 5,6 dihydroxyindole to indole-5'6 quinone. This is Phenoloxidase subunit 2 from Bombyx mori (Silk moth).